The sequence spans 425 residues: Serine hydroxymethyltransferase (425 aa).

Residues Leu128 and 132–134 each bind (6S)-5,6,7,8-tetrahydrofolate; that span reads GHL. The residue at position 237 (Lys237) is an N6-(pyridoxal phosphate)lysine.

It belongs to the SHMT family. As to quaternary structure, homodimer. The cofactor is pyridoxal 5'-phosphate.

The protein localises to the cytoplasm. It catalyses the reaction (6R)-5,10-methylene-5,6,7,8-tetrahydrofolate + glycine + H2O = (6S)-5,6,7,8-tetrahydrofolate + L-serine. The protein operates within one-carbon metabolism; tetrahydrofolate interconversion. It participates in amino-acid biosynthesis; glycine biosynthesis; glycine from L-serine: step 1/1. In terms of biological role, catalyzes the reversible interconversion of serine and glycine with tetrahydrofolate (THF) serving as the one-carbon carrier. This reaction serves as the major source of one-carbon groups required for the biosynthesis of purines, thymidylate, methionine, and other important biomolecules. Also exhibits THF-independent aldolase activity toward beta-hydroxyamino acids, producing glycine and aldehydes, via a retro-aldol mechanism. The polypeptide is Serine hydroxymethyltransferase (Wolbachia pipientis wMel).